Here is a 493-residue protein sequence, read N- to C-terminus: NADH-quinone oxidoreductase subunit N (493 aa).

A run of 14 helical transmembrane segments spans residues 8-28, 34-54, 71-91, 102-122, 123-143, 157-177, 200-220, 232-252, 266-286, 294-314, 325-345, 370-390, 405-427, and 443-463; these read ALLPFIVLSAAAVAVMLAIAI, LVFWLTVGGLLAGLSTLPHAS, GLFFHALFLLAALVVALLCLA, EIFVLLLTSTLGALLLVSSAH, LAMFFLGLEVLTISLFPMIAY, YLMLSGLASSFLMFGMAMVYG, ALAGLFLILAAIGFKLSLVPF, PTPVTAFLATVSKASVFALLL, FLCVLGLLAVVSILAGNLLAL, LLAYSSIAHMGYLLTGFVAAG, IAFYLAAYTVTSLTAFGAISA, AAVLTLSLLSLAGIPLTVGFV, WPLVATVVIGSGIGIYYYLRVVL, and PAAGTALAAAALVILAAGLFP. Residues 473–493 are disordered; the sequence is VPQPPPTADSPQRLTATGGLP.

This sequence belongs to the complex I subunit 2 family. NDH-1 is composed of 14 different subunits. Subunits NuoA, H, J, K, L, M, N constitute the membrane sector of the complex.

It localises to the cell inner membrane. The enzyme catalyses a quinone + NADH + 5 H(+)(in) = a quinol + NAD(+) + 4 H(+)(out). In terms of biological role, NDH-1 shuttles electrons from NADH, via FMN and iron-sulfur (Fe-S) centers, to quinones in the respiratory chain. The immediate electron acceptor for the enzyme in this species is believed to be ubiquinone. Couples the redox reaction to proton translocation (for every two electrons transferred, four hydrogen ions are translocated across the cytoplasmic membrane), and thus conserves the redox energy in a proton gradient. In Methylococcus capsulatus (strain ATCC 33009 / NCIMB 11132 / Bath), this protein is NADH-quinone oxidoreductase subunit N.